A 348-amino-acid polypeptide reads, in one-letter code: Anthranilate phosphoribosyltransferase (348 aa).

5-phospho-alpha-D-ribose 1-diphosphate contacts are provided by residues G81, 84-85 (GD), 91-94 (NVST), 109-117 (KHGNRAVSG), and S121. G81 is an anthranilate binding site. Residue S93 participates in Mg(2+) binding. Residue N112 coordinates anthranilate. R167 lines the anthranilate pocket. 2 residues coordinate Mg(2+): D226 and E227.

It belongs to the anthranilate phosphoribosyltransferase family. As to quaternary structure, homodimer. The cofactor is Mg(2+).

The enzyme catalyses N-(5-phospho-beta-D-ribosyl)anthranilate + diphosphate = 5-phospho-alpha-D-ribose 1-diphosphate + anthranilate. Its pathway is amino-acid biosynthesis; L-tryptophan biosynthesis; L-tryptophan from chorismate: step 2/5. In terms of biological role, catalyzes the transfer of the phosphoribosyl group of 5-phosphorylribose-1-pyrophosphate (PRPP) to anthranilate to yield N-(5'-phosphoribosyl)-anthranilate (PRA). This is Anthranilate phosphoribosyltransferase from Stutzerimonas stutzeri (strain A1501) (Pseudomonas stutzeri).